We begin with the raw amino-acid sequence, 243 residues long: 1-(5-phosphoribosyl)-5-[(5-phosphoribosylamino)methylideneamino] imidazole-4-carboxamide isomerase (243 aa).

The active-site Proton acceptor is the aspartate 8. Aspartate 130 (proton donor) is an active-site residue.

It belongs to the HisA/HisF family.

Its subcellular location is the cytoplasm. The enzyme catalyses 1-(5-phospho-beta-D-ribosyl)-5-[(5-phospho-beta-D-ribosylamino)methylideneamino]imidazole-4-carboxamide = 5-[(5-phospho-1-deoxy-D-ribulos-1-ylimino)methylamino]-1-(5-phospho-beta-D-ribosyl)imidazole-4-carboxamide. It functions in the pathway amino-acid biosynthesis; L-histidine biosynthesis; L-histidine from 5-phospho-alpha-D-ribose 1-diphosphate: step 4/9. The chain is 1-(5-phosphoribosyl)-5-[(5-phosphoribosylamino)methylideneamino] imidazole-4-carboxamide isomerase from Cellvibrio japonicus (strain Ueda107) (Pseudomonas fluorescens subsp. cellulosa).